The following is a 149-amino-acid chain: Calmodulin (149 aa).

A2 carries the post-translational modification N-acetylalanine. 4 EF-hand domains span residues 8-43 (EQIA…LGQN), 44-79 (PTEA…KMKD), 81-116 (DSEE…LGEK), and 117-149 (LTDE…MTTK). Residues D21, D23, D25, T27, E32, D57, D59, N61, T63, E68, D94, D96, N98, and E105 each contribute to the Ca(2+) site. N6,N6,N6-trimethyllysine is present on K116. Residues D130, D132, D134, Q136, and E141 each coordinate Ca(2+).

This sequence belongs to the calmodulin family. In terms of assembly, interacts (in the presence of Ca(2+)) with pde-1, madf-3, rpl-7A, tax-6, efk-1, npp-1, obr-4, sos-1, akt-1, unc-13, tag-196, ugt-48, nmy-2, F27D4.4, ddx-23, efa-6 and R11H6.4.

Functionally, calmodulin mediates the control of a large number of enzymes, ion channels and other proteins by Ca(2+). Among the enzymes to be stimulated by the calmodulin-Ca(2+) complex are a number of protein kinases and phosphatases. This is Calmodulin (cmd-1) from Caenorhabditis elegans.